We begin with the raw amino-acid sequence, 637 residues long: Chaperone protein HtpG (637 aa).

An a; substrate-binding region spans residues 1–335; sequence MQGTVNSERL…SSDLPLNISR (335 aa). A b region spans residues 336–559; that stretch reads ETLQNNKIIE…DGSMDIRMER (224 aa). Residues 560–637 are c; that stretch reads FLREQKQLNY…RMNNVLSQIN (78 aa).

The protein belongs to the heat shock protein 90 family. Homodimer.

Its subcellular location is the cytoplasm. Functionally, molecular chaperone. Has ATPase activity. This chain is Chaperone protein HtpG, found in Ehrlichia ruminantium (strain Welgevonden).